Here is a 278-residue protein sequence, read N- to C-terminus: Secoisolariciresinol dehydrogenase (278 aa).

NAD(+) contacts are provided by residues 23–28, D47, V73, and N99; that span reads GGAGGI. Residues S104 and S164 each contribute to the substrate site. Y167 serves as the catalytic Proton donor/acceptor. NAD(+) contacts are provided by K171 and V200.

The protein belongs to the short-chain dehydrogenases/reductases (SDR) family. Homotetramer.

It carries out the reaction (-)-secoisolariciresinol + 2 NAD(+) = (-)-matairesinol + 2 NADH + 2 H(+). Functionally, oxidoreductase involved in lignan biosynthesis. Catalyzes the stereospecific conversion of (-)-secoisolariciresinol to (-)-matairesinol via a lactol intermediate. In Podophyllum peltatum (American mandrake), this protein is Secoisolariciresinol dehydrogenase.